The sequence spans 604 residues: Kelch-like protein 20 (604 aa).

The 68-residue stretch at 63 to 130 (CDVVLVVGAK…SYTSQITVEE (68 aa)) folds into the BTB domain. In terms of domain architecture, BACK spans 165-267 (CLGIRAFADT…SPKFLVGTVG (103 aa)). Kelch repeat units lie at residues 314–360 (VLFA…VLDD), 362–408 (LYAV…VLGG), 409–455 (YLYA…VLGG), 457–502 (LYAV…VYQD), 504–549 (IYAV…VVNG), and 551–596 (LMAV…VIKM).

As to quaternary structure, component of the BCR(KLHL20) E3 ubiquitin ligase complex, at least composed of cul3, klhl20 and rbx1.

The protein localises to the cytoplasm. It is found in the perinuclear region. Its subcellular location is the nucleus. Its pathway is protein modification; protein ubiquitination. Its function is as follows. Substrate-specific adapter of a BCR (BTB-CUL3-RBX1) E3 ubiquitin-protein ligase complex involved in interferon response and anterograde Golgi to endosome transport. The BCR(KLHL20) E3 ubiquitin ligase complex mediates the ubiquitination of target proteins, leading to their degradation by the proteasome. It also specifically mediates 'Lys-33'-linked ubiquitination. This is Kelch-like protein 20 (klhl20) from Xenopus laevis (African clawed frog).